Reading from the N-terminus, the 344-residue chain is MLLFQKTLSRVAAPISVAANLILILLIIFKSPAQMGNYKYLLIGLSIFEMSYAVLDVVSETTVLSIKKSFVVVVPYKDRSFGQETAMDINLIYCGFFGFSMGMFVVIFAYRSFLTTGNTILRKFEGFKIISWFAYPLFYAIVWILVAWGPLASFPEMDIVVRPFLLDELNMTVDEVAYTGRLFYSTIDNSLRYSAILTGVLQWVLTASSLFLVIFFGLRCYFHYGKLVQLTDVQSIRLRQLQNQLFLALVCQATVPLILMHIPVTILYTCCVLNIVFNPFSVATTIALFPAIDPLPTIFIVKNYRVALFEFVCPSCLCWSETLKHMGSNRITSYRSNTVNALSM.

Topologically, residues 1–10 are extracellular; it reads MLLFQKTLSR. A helical membrane pass occupies residues 11-31; the sequence is VAAPISVAANLILILLIIFKS. Topologically, residues 32-39 are cytoplasmic; the sequence is PAQMGNYK. Residues 40-60 form a helical membrane-spanning segment; the sequence is YLLIGLSIFEMSYAVLDVVSE. Residues 61-88 lie on the Extracellular side of the membrane; it reads TTVLSIKKSFVVVVPYKDRSFGQETAMD. A helical transmembrane segment spans residues 89–109; that stretch reads INLIYCGFFGFSMGMFVVIFA. Residues 110–128 are Cytoplasmic-facing; it reads YRSFLTTGNTILRKFEGFK. A helical transmembrane segment spans residues 129-149; that stretch reads IISWFAYPLFYAIVWILVAWG. Over 150–195 the chain is Extracellular; that stretch reads PLASFPEMDIVVRPFLLDELNMTVDEVAYTGRLFYSTIDNSLRYSA. N170 carries N-linked (GlcNAc...) asparagine glycosylation. Residues 196–216 traverse the membrane as a helical segment; it reads ILTGVLQWVLTASSLFLVIFF. Residues 217–256 lie on the Cytoplasmic side of the membrane; it reads GLRCYFHYGKLVQLTDVQSIRLRQLQNQLFLALVCQATVP. A helical transmembrane segment spans residues 257–277; the sequence is LILMHIPVTILYTCCVLNIVF. Residues 278 to 279 are Extracellular-facing; it reads NP. Residues 280–300 traverse the membrane as a helical segment; the sequence is FSVATTIALFPAIDPLPTIFI. The Cytoplasmic segment spans residues 301 to 344; it reads VKNYRVALFEFVCPSCLCWSETLKHMGSNRITSYRSNTVNALSM.

The protein belongs to the nematode receptor-like protein str family. Expressed in the ADL chemosensory neurons.

It localises to the cell membrane. Its function is as follows. Probable G-protein coupled receptor. This is G-protein coupled receptor str-217 from Caenorhabditis elegans.